The primary structure comprises 595 residues: Aspartate--tRNA(Asp/Asn) ligase (595 aa).

Residue E175 coordinates L-aspartate. Residues 199-202 (QQYK) are aspartate. L-aspartate contacts are provided by R221 and H454. ATP is bound at residue 221-223 (RDE). E488 is an ATP binding site. R495 lines the L-aspartate pocket. Residue 540-543 (GIDR) participates in ATP binding.

It belongs to the class-II aminoacyl-tRNA synthetase family. Type 1 subfamily. In terms of assembly, homodimer.

It is found in the cytoplasm. It catalyses the reaction tRNA(Asx) + L-aspartate + ATP = L-aspartyl-tRNA(Asx) + AMP + diphosphate. Its function is as follows. Aspartyl-tRNA synthetase with relaxed tRNA specificity since it is able to aspartylate not only its cognate tRNA(Asp) but also tRNA(Asn). Reaction proceeds in two steps: L-aspartate is first activated by ATP to form Asp-AMP and then transferred to the acceptor end of tRNA(Asp/Asn). The polypeptide is Aspartate--tRNA(Asp/Asn) ligase (Brucella anthropi (strain ATCC 49188 / DSM 6882 / CCUG 24695 / JCM 21032 / LMG 3331 / NBRC 15819 / NCTC 12168 / Alc 37) (Ochrobactrum anthropi)).